We begin with the raw amino-acid sequence, 949 residues long: Translation initiation factor IF-2 (949 aa).

Disordered regions lie at residues 46-82 (LTAS…EAEA), 145-176 (EPAV…ERAS), and 188-361 (IPIT…KTEL). Low complexity predominate over residues 152–162 (ASPAVTAAKPV). Residues 163–172 (PATPAAPPQP) show a composition bias toward pro residues. The span at 263–276 (PRDAAAPRPAGARP) shows a compositional bias: low complexity. The segment covering 334–344 (SREERQFDPFH) has biased composition (basic and acidic residues). One can recognise a tr-type G domain in the interval 449-618 (ERPPVVTIMG…LLQADLMDLK (170 aa)). A G1 region spans residues 458 to 465 (GHVDHGKT). 458–465 (GHVDHGKT) serves as a coordination point for GTP. A G2 region spans residues 483–487 (GITQH). A G3 region spans residues 504–507 (DTPG). GTP contacts are provided by residues 504–508 (DTPGH) and 558–561 (NKID). The segment at 558–561 (NKID) is G4. The interval 594–596 (SAK) is G5.

The protein belongs to the TRAFAC class translation factor GTPase superfamily. Classic translation factor GTPase family. IF-2 subfamily.

The protein localises to the cytoplasm. In terms of biological role, one of the essential components for the initiation of protein synthesis. Protects formylmethionyl-tRNA from spontaneous hydrolysis and promotes its binding to the 30S ribosomal subunits. Also involved in the hydrolysis of GTP during the formation of the 70S ribosomal complex. This Trichlorobacter lovleyi (strain ATCC BAA-1151 / DSM 17278 / SZ) (Geobacter lovleyi) protein is Translation initiation factor IF-2.